Consider the following 32-residue polypeptide: Potassium channel toxin alpha-KTx 10.2 (32 aa).

3 cysteine pairs are disulfide-bonded: C3-C22, C8-C12, and C27-C29. The residue at position 32 (Y32) is a Tyrosine amide.

Belongs to the short scorpion toxin superfamily. Potassium channel inhibitor family. Alpha-KTx 10 subfamily. As to expression, expressed by the venom gland.

Its subcellular location is the secreted. Its function is as follows. Blocks Shaker B potassium-channels (Kv1.1/KCNA1 sub-family). In Centruroides noxius (Mexican scorpion), this protein is Potassium channel toxin alpha-KTx 10.2.